The chain runs to 92 residues: MVRSVWKGPFVEGSLLKKADAARASGRHDVIKIWSRRSTILPQFVGLVFGVYNGQKHVPVSINEEMVGHKFGEFSPTRTFHGHSGDKKAKKA.

Belongs to the universal ribosomal protein uS19 family.

Protein S19 forms a complex with S13 that binds strongly to the 16S ribosomal RNA. This chain is Small ribosomal subunit protein uS19, found in Rhodopseudomonas palustris (strain BisA53).